Reading from the N-terminus, the 116-residue chain is Putative BPES syndrome breakpoint region protein (116 aa).

In terms of tissue distribution, seems to be expressed only in testis.

The protein is Putative BPES syndrome breakpoint region protein (BPESC1) of Homo sapiens (Human).